We begin with the raw amino-acid sequence, 160 residues long: Protein-export protein SecB (160 aa).

This sequence belongs to the SecB family. Homotetramer, a dimer of dimers. One homotetramer interacts with 1 SecA dimer.

It is found in the cytoplasm. One of the proteins required for the normal export of preproteins out of the cell cytoplasm. It is a molecular chaperone that binds to a subset of precursor proteins, maintaining them in a translocation-competent state. It also specifically binds to its receptor SecA. This Beijerinckia indica subsp. indica (strain ATCC 9039 / DSM 1715 / NCIMB 8712) protein is Protein-export protein SecB.